We begin with the raw amino-acid sequence, 78 residues long: Small ribosomal subunit protein bS16 (78 aa).

It belongs to the bacterial ribosomal protein bS16 family.

This Maridesulfovibrio salexigens (strain ATCC 14822 / DSM 2638 / NCIMB 8403 / VKM B-1763) (Desulfovibrio salexigens) protein is Small ribosomal subunit protein bS16.